A 64-amino-acid chain; its full sequence is Movement protein TGBp3 (64 aa).

Over 1 to 7 (MSLSYLD) the chain is Lumenal. Residues 8 to 28 (LLLAFGCVLAVSVIVNCFLVS) traverse the membrane as a helical segment. At 29–64 (HNNCVIEITGEAVRISGCTFDRTFVELVKGLKPARH) the chain is on the cytoplasmic side.

Belongs to the Tymovirales TGBp3 protein family.

It is found in the host endoplasmic reticulum membrane. Its function is as follows. Plays a role in viral cell-to-cell propagation, by facilitating genome transport to neighboring plant cells through plasmosdesmata. May induce the formation of granular vesicles derived from the Endoplasmic reticulum, which align on actin filaments. In Chrysanthemum morifolium (Florist's daisy), this protein is Movement protein TGBp3.